Reading from the N-terminus, the 321-residue chain is uncharacterized protein (321 aa).

This is an uncharacterized protein from Aquifex aeolicus (strain VF5).